We begin with the raw amino-acid sequence, 342 residues long: L-threonine 3-dehydrogenase (342 aa).

Residue Cys-38 coordinates Zn(2+). Residues Thr-40 and His-43 each act as charge relay system in the active site. The Zn(2+) site is built by His-63, Glu-64, Cys-93, Cys-96, Cys-99, and Cys-107. NAD(+) is bound by residues Ile-175, Asp-195, Arg-200, 262–264 (LGI), and 286–287 (IY).

The protein belongs to the zinc-containing alcohol dehydrogenase family. In terms of assembly, homotetramer. Zn(2+) serves as cofactor.

It is found in the cytoplasm. It carries out the reaction L-threonine + NAD(+) = (2S)-2-amino-3-oxobutanoate + NADH + H(+). It functions in the pathway amino-acid degradation; L-threonine degradation via oxydo-reductase pathway; glycine from L-threonine: step 1/2. In terms of biological role, catalyzes the NAD(+)-dependent oxidation of L-threonine to 2-amino-3-ketobutyrate. This Burkholderia ambifaria (strain MC40-6) protein is L-threonine 3-dehydrogenase.